The sequence spans 71 residues: Gas vesicle protein A (71 aa).

The alpha helix 1 stretch occupies residues 12–22 (LAEVIDRILDK). A beta-strand 1 region spans residues 26 to 34 (IDAWARVSL). The interval 35 to 37 (VGI) is beta turn. The interval 38–46 (ELLAIEARV) is beta-strand 2. Residues 51 to 70 (VETYLKYAEAVGLTQXAXXA) are alpha helix 2.

It belongs to the gas vesicle GvpA family. As to quaternary structure, the gas vesicle shell is 2 nm thick and consists of a single layer of this protein. It forms helical ribs nearly perpendicular to the long axis of the vesicle.

It is found in the gas vesicle shell. Functionally, gas vesicles are hollow, gas filled proteinaceous nanostructures found in some microorganisms. During planktonic growth they allow positioning of the organism at a favorable depth for light or nutrient acquisition. GvpA forms the protein shell. This Microcystis sp. (strain BC 84/1) protein is Gas vesicle protein A.